Here is a 569-residue protein sequence, read N- to C-terminus: Dihydroxy-acid dehydratase (569 aa).

Residue Asp80 coordinates Mg(2+). Cys121 is a binding site for [2Fe-2S] cluster. 2 residues coordinate Mg(2+): Asp122 and Lys123. Lys123 is subject to N6-carboxylysine. [2Fe-2S] cluster is bound at residue Cys194. Residue Glu446 coordinates Mg(2+). The active-site Proton acceptor is Ser472.

Belongs to the IlvD/Edd family. In terms of assembly, homodimer. [2Fe-2S] cluster is required as a cofactor. It depends on Mg(2+) as a cofactor.

The catalysed reaction is (2R)-2,3-dihydroxy-3-methylbutanoate = 3-methyl-2-oxobutanoate + H2O. The enzyme catalyses (2R,3R)-2,3-dihydroxy-3-methylpentanoate = (S)-3-methyl-2-oxopentanoate + H2O. It functions in the pathway amino-acid biosynthesis; L-isoleucine biosynthesis; L-isoleucine from 2-oxobutanoate: step 3/4. Its pathway is amino-acid biosynthesis; L-valine biosynthesis; L-valine from pyruvate: step 3/4. Functions in the biosynthesis of branched-chain amino acids. Catalyzes the dehydration of (2R,3R)-2,3-dihydroxy-3-methylpentanoate (2,3-dihydroxy-3-methylvalerate) into 2-oxo-3-methylpentanoate (2-oxo-3-methylvalerate) and of (2R)-2,3-dihydroxy-3-methylbutanoate (2,3-dihydroxyisovalerate) into 2-oxo-3-methylbutanoate (2-oxoisovalerate), the penultimate precursor to L-isoleucine and L-valine, respectively. This Desulforudis audaxviator (strain MP104C) protein is Dihydroxy-acid dehydratase.